A 408-amino-acid polypeptide reads, in one-letter code: Argininosuccinate synthase (408 aa).

Residues 10-18 (AYSGGLDTS) and A37 contribute to the ATP site. L-citrulline-binding residues include Y90 and S95. G120 contributes to the ATP binding site. L-aspartate contacts are provided by T122, N126, and D127. N126 serves as a coordination point for L-citrulline. Positions 130, 181, 190, 266, and 278 each coordinate L-citrulline.

Belongs to the argininosuccinate synthase family. Type 1 subfamily. In terms of assembly, homotetramer.

The protein localises to the cytoplasm. It carries out the reaction L-citrulline + L-aspartate + ATP = 2-(N(omega)-L-arginino)succinate + AMP + diphosphate + H(+). The protein operates within amino-acid biosynthesis; L-arginine biosynthesis; L-arginine from L-ornithine and carbamoyl phosphate: step 2/3. The sequence is that of Argininosuccinate synthase from Cereibacter sphaeroides (strain ATCC 17029 / ATH 2.4.9) (Rhodobacter sphaeroides).